A 356-amino-acid polypeptide reads, in one-letter code: DNA integrity scanning protein DisA (356 aa).

The DAC domain occupies 11–149; the sequence is VHTMRDTLQR…EGKSHILEEP (139 aa). ATP-binding positions include glycine 78, leucine 96, and 109-113; that span reads TRHRS.

The protein belongs to the DisA family. In terms of assembly, homooctamer. Mg(2+) is required as a cofactor.

It catalyses the reaction 2 ATP = 3',3'-c-di-AMP + 2 diphosphate. Participates in a DNA-damage check-point. DisA forms globular foci that rapidly scan along the chromosomes searching for lesions. Its function is as follows. Also has diadenylate cyclase activity, catalyzing the condensation of 2 ATP molecules into cyclic di-AMP (c-di-AMP). c-di-AMP likely acts as a signaling molecule that may couple DNA integrity with a cellular process. The protein is DNA integrity scanning protein DisA of Corynebacterium efficiens (strain DSM 44549 / YS-314 / AJ 12310 / JCM 11189 / NBRC 100395).